Here is a 391-residue protein sequence, read N- to C-terminus: Formate-dependent phosphoribosylglycinamide formyltransferase (391 aa).

Residues 20–21 and Glu80 each bind N(1)-(5-phospho-beta-D-ribosyl)glycinamide; that span reads EL. ATP is bound by residues Arg112, Lys153, 158–163, 193–196, and Glu201; these read SSGKGQ and EGFV. One can recognise an ATP-grasp domain in the interval 117 to 306; sequence RLAAEELQLP…EFALHVRAFT (190 aa). Residues Glu265 and Glu277 each coordinate Mg(2+). N(1)-(5-phospho-beta-D-ribosyl)glycinamide-binding positions include Asp284, Lys354, and 361–362; that span reads RR.

Belongs to the PurK/PurT family. Homodimer.

The enzyme catalyses N(1)-(5-phospho-beta-D-ribosyl)glycinamide + formate + ATP = N(2)-formyl-N(1)-(5-phospho-beta-D-ribosyl)glycinamide + ADP + phosphate + H(+). It participates in purine metabolism; IMP biosynthesis via de novo pathway; N(2)-formyl-N(1)-(5-phospho-D-ribosyl)glycinamide from N(1)-(5-phospho-D-ribosyl)glycinamide (formate route): step 1/1. Involved in the de novo purine biosynthesis. Catalyzes the transfer of formate to 5-phospho-ribosyl-glycinamide (GAR), producing 5-phospho-ribosyl-N-formylglycinamide (FGAR). Formate is provided by PurU via hydrolysis of 10-formyl-tetrahydrofolate. This is Formate-dependent phosphoribosylglycinamide formyltransferase from Aliivibrio fischeri (strain ATCC 700601 / ES114) (Vibrio fischeri).